Here is a 697-residue protein sequence, read N- to C-terminus: Transmembrane protein 168 (697 aa).

3 helical membrane passes run 36–56 (LGYL…YVRW), 63–83 (LILV…ILYY), and 89–109 (AASL…LCFL). An N-linked (GlcNAc...) asparagine glycan is attached at Asn-111. The next 7 membrane-spanning stretches (helical) occupy residues 172–192 (MLVE…MLII), 199–219 (FLAI…SLET), 223–243 (PIAF…DIYF), 265–285 (LSVV…AFKL), 293–313 (FVIP…IIFL), 352–372 (FCLI…ILGA), and 380–400 (GIFL…HGLF). Asn-533 and Asn-598 each carry an N-linked (GlcNAc...) asparagine glycan. Residues 646-666 (ITYPLVHLANWLCGLNLFWIC) traverse the membrane as a helical segment.

This sequence belongs to the TMEM168 family.

Its subcellular location is the nucleus membrane. Plays a key role in maintaining the cardiac electrical stability by modulating cell surface expression of SCN5A. May play a role in the modulation of anxiety behavior by regulating GABAergic neuronal system in the nucleus accumbens. The chain is Transmembrane protein 168 from Homo sapiens (Human).